The following is a 262-amino-acid chain: Small ribosomal subunit protein eS1 (262 aa).

It belongs to the eukaryotic ribosomal protein eS1 family. In terms of assembly, component of the small ribosomal subunit. Mature ribosomes consist of a small (40S) and a large (60S) subunit. The 40S subunit contains about 33 different proteins and 1 molecule of RNA (18S). The 60S subunit contains about 49 different proteins and 3 molecules of RNA (25S, 5.8S and 5S).

It is found in the cytoplasm. The protein is Small ribosomal subunit protein eS1 of Theileria parva (East coast fever infection agent).